The sequence spans 334 residues: Cell division protein ZipA (334 aa).

Residues 1–2 (ME) are Periplasmic-facing. Residues 3-23 (LHIIFLILGGLLIVLLAGFSI) form a helical membrane-spanning segment. The Cytoplasmic segment spans residues 24–334 (YSARREKSRI…DRQAYFARVS (311 aa)).

It belongs to the ZipA family. Interacts with FtsZ via their C-terminal domains.

It is found in the cell inner membrane. Essential cell division protein that stabilizes the FtsZ protofilaments by cross-linking them and that serves as a cytoplasmic membrane anchor for the Z ring. Also required for the recruitment to the septal ring of downstream cell division proteins. The polypeptide is Cell division protein ZipA (Haemophilus ducreyi (strain 35000HP / ATCC 700724)).